Reading from the N-terminus, the 329-residue chain is 7,8-didemethyl-8-hydroxy-5-deazariboflavin synthase (329 aa).

One can recognise a Radical SAM core domain in the interval 6–244 (ITYTKNVFLP…EEISIQVAPN (239 aa)). The [4Fe-4S] cluster site is built by cysteine 20, cysteine 24, and cysteine 27.

It belongs to the radical SAM superfamily. CofG family. In terms of assembly, consists of two subunits, CofG and CofH. Requires [4Fe-4S] cluster as cofactor.

It carries out the reaction 5-amino-5-(4-hydroxybenzyl)-6-(D-ribitylimino)-5,6-dihydrouracil + S-adenosyl-L-methionine = 7,8-didemethyl-8-hydroxy-5-deazariboflavin + 5'-deoxyadenosine + L-methionine + NH4(+) + H(+). It participates in cofactor biosynthesis; coenzyme F0 biosynthesis. Catalyzes the radical-mediated synthesis of 7,8-didemethyl-8-hydroxy-5-deazariboflavin from 5-amino-5-(4-hydroxybenzyl)-6-(D-ribitylimino)-5,6-dihydrouracil. The sequence is that of 7,8-didemethyl-8-hydroxy-5-deazariboflavin synthase from Methanoregula boonei (strain DSM 21154 / JCM 14090 / 6A8).